The chain runs to 330 residues: Phenylalanine--tRNA ligase alpha subunit (330 aa).

Glu-257 serves as a coordination point for Mg(2+).

This sequence belongs to the class-II aminoacyl-tRNA synthetase family. Phe-tRNA synthetase alpha subunit type 1 subfamily. As to quaternary structure, tetramer of two alpha and two beta subunits. Requires Mg(2+) as cofactor.

The protein resides in the cytoplasm. The enzyme catalyses tRNA(Phe) + L-phenylalanine + ATP = L-phenylalanyl-tRNA(Phe) + AMP + diphosphate + H(+). This Nostoc punctiforme (strain ATCC 29133 / PCC 73102) protein is Phenylalanine--tRNA ligase alpha subunit.